Here is a 467-residue protein sequence, read N- to C-terminus: Asparagine--tRNA ligase (467 aa).

The protein belongs to the class-II aminoacyl-tRNA synthetase family. Homodimer.

The protein resides in the cytoplasm. It carries out the reaction tRNA(Asn) + L-asparagine + ATP = L-asparaginyl-tRNA(Asn) + AMP + diphosphate + H(+). This chain is Asparagine--tRNA ligase, found in Haemophilus influenzae (strain PittEE).